The chain runs to 539 residues: Membrane protein insertase YidC (539 aa).

A helical membrane pass occupies residues 6–26 (VILAVALSFAVLLGWQFLFPP). The segment at 28 to 63 (PQQPAPAQQEQTAQPNQAVDSSVAGPVSNQLPDPAS) is disordered. Low complexity predominate over residues 32 to 45 (APAQQEQTAQPNQA). Residues 54–63 (VSNQLPDPAS) are compositionally biased toward polar residues. The next 3 helical transmembrane spans lie at 349–369 (YGIA…PLSH), 421–441 (MLLQ…TVAL), and 496–516 (IMMF…SGLV).

It belongs to the OXA1/ALB3/YidC family. Type 1 subfamily. In terms of assembly, interacts with the Sec translocase complex via SecD. Specifically interacts with transmembrane segments of nascent integral membrane proteins during membrane integration.

The protein resides in the cell inner membrane. Functionally, required for the insertion and/or proper folding and/or complex formation of integral membrane proteins into the membrane. Involved in integration of membrane proteins that insert both dependently and independently of the Sec translocase complex, as well as at least some lipoproteins. Aids folding of multispanning membrane proteins. The sequence is that of Membrane protein insertase YidC from Maridesulfovibrio salexigens (strain ATCC 14822 / DSM 2638 / NCIMB 8403 / VKM B-1763) (Desulfovibrio salexigens).